Here is a 437-residue protein sequence, read N- to C-terminus: Protein arginine methyltransferase NDUFAF7 homolog, mitochondrial (437 aa).

The interval 21-49 (RPNLGATGTPKMEPPKEQPEASSKAESGH) is disordered.

It belongs to the NDUFAF7 family.

The protein resides in the mitochondrion. The catalysed reaction is L-arginyl-[protein] + 2 S-adenosyl-L-methionine = N(omega),N(omega)'-dimethyl-L-arginyl-[protein] + 2 S-adenosyl-L-homocysteine + 2 H(+). In terms of biological role, arginine methyltransferase involved in the assembly or stability of mitochondrial NADH:ubiquinone oxidoreductase complex (complex I). The protein is Protein arginine methyltransferase NDUFAF7 homolog, mitochondrial of Drosophila melanogaster (Fruit fly).